The chain runs to 588 residues: Outer membrane transporter CdiB (588 aa).

A helical membrane pass occupies residues 33–55 (VVRYFSLLPCLCILSFSSPAAML). A POTRA domain is found at 104-179 (FTVSRIVVSG…GVLHITVMEG (76 aa)).

It belongs to the TPS (TC 1.B.20) family.

The protein localises to the cell outer membrane. Its function is as follows. Potential outer membrane protein component of a toxin-immunity protein module, which functions as a cellular contact-dependent growth inhibition (CDI) system. CDI modules allow bacteria to communicate with and inhibit the growth of closely related neighboring bacteria in a contact-dependent fashion. This protein may be required for secretion and assembly of the CdiA toxin protein. In terms of biological role, probable member of a two partner secretion pathway (TPS) in which it mediates the secretion of CdiA. This is Outer membrane transporter CdiB from Escherichia coli O6:K15:H31 (strain 536 / UPEC).